The sequence spans 674 residues: MLTSYQLESPALSWGEDGAPHSNQFDDVYFDKESGLEETRHVFLKNNQLSGRWASLQKNAFVIAETGFGTGLNFLCAWQAFLTEAASDKQLHFISVEKYPMTKSMLTDALKMWPSISHLSQQLIDAYPEVCHGLHRIELEQGRIQLTLWFGEAEDGFAALDADVDAWFLDGFAPSKNPEMWSDNLFKHIHRLSHQGTTFSTFTAAGIVRRGLKNVGFDVRKVKGFGQKREMTVGELNSSTAPLSARMSQGQAWFNLRQDKTSEITKVLVVGAGLAGANTAYALAKQGIKVEVWEQGNCIAGGASGNPQGMLYPKLASQDTPVNRFYLSAYLHATRLYSSLDRHKQFWDACGLIQIPKNDKEAVRFQKLLDEKLYPEAILQASKDREGCLFLPLSGWVVLTQLCETLLSHENIHVCLNTKLESLSPIELDDKTFGWQARSKYQQAPLNDRQACFSHVVLCTANDTKALGVTPKTPDYPIRGQVSFMDIEKAKAACQTIGESADKIDFDKILCEFGYVSPSINGLLHFGSTYDLKDLDDRVREEGHKRNLAILESLLLLPKETFNSEDCGGRVSFRCAVPDYTPIVGPVQSEDVYQQAYSTLTKNAKWQSNEIAEPIKQLYINIGHGSRGLISTPLSGSYIASLITGTPSPLEQKVSHKLHPSRFIIRDLKRSQIL.

Positions 1–237 are tRNA (mnm(5)s(2)U34)-methyltransferase; the sequence is MLTSYQLESP…KREMTVGELN (237 aa). The segment at 270-674 is FAD-dependent cmnm(5)s(2)U34 oxidoreductase; that stretch reads VGAGLAGANT…IRDLKRSQIL (405 aa).

In the N-terminal section; belongs to the methyltransferase superfamily. tRNA (mnm(5)s(2)U34)-methyltransferase family. This sequence in the C-terminal section; belongs to the DAO family. The cofactor is FAD.

It is found in the cytoplasm. The enzyme catalyses 5-aminomethyl-2-thiouridine(34) in tRNA + S-adenosyl-L-methionine = 5-methylaminomethyl-2-thiouridine(34) in tRNA + S-adenosyl-L-homocysteine + H(+). Its function is as follows. Catalyzes the last two steps in the biosynthesis of 5-methylaminomethyl-2-thiouridine (mnm(5)s(2)U) at the wobble position (U34) in tRNA. Catalyzes the FAD-dependent demodification of cmnm(5)s(2)U34 to nm(5)s(2)U34, followed by the transfer of a methyl group from S-adenosyl-L-methionine to nm(5)s(2)U34, to form mnm(5)s(2)U34. The polypeptide is tRNA 5-methylaminomethyl-2-thiouridine biosynthesis bifunctional protein MnmC (Marinomonas sp. (strain MWYL1)).